Reading from the N-terminus, the 1257-residue chain is Phosphatidylinositol 3,4,5-trisphosphate 5-phosphatase 2 (1257 aa).

The region spanning 21–117 is the SH2 domain; it reads WYHRDLSRAA…GLVCALLLPV (97 aa). Residues 119-132 show a composition bias toward basic and acidic residues; that stretch reads GEREPDPPDDRDAS. The segment at 119 to 181 is disordered; sequence GEREPDPPDD…ESTPNGLSTV (63 aa). Position 132 is a phosphoserine (Ser-132). Residues 156 to 166 are compositionally biased toward pro residues; that stretch reads PSSPLPTPETP. Thr-165 is subject to Phosphothreonine. A phosphoserine mark is found at Ser-241 and Ser-353. The residue at position 887 (Tyr-887) is a Phosphotyrosine. Position 891 is a phosphoserine (Ser-891). A disordered region spans residues 897–986; that stretch reads TGAKSKVPSV…PPKNSFNNPA (90 aa). The span at 939-951 shows a compositional bias: pro residues; that stretch reads PPPTGRPPAPPRA. The short motif at 945–950 is the SH3-binding element; it reads PPAPPR. A compositionally biased stretch (basic and acidic residues) spans 952 to 966; sequence VPREEPLNPRLKSEG. The NPXY motif motif lies at 984-987; it reads NPAY. The residue at position 987 (Tyr-987) is a Phosphotyrosine. Residues 999–1008 show a composition bias toward low complexity; it reads PLEPPSLARA. A disordered region spans residues 999 to 1119; sequence PLEPPSLARA…FLGEVASGDD (121 aa). Pro residues-rich tracts occupy residues 1049–1060 and 1088–1104; these read LPPPDFPPPPLP and GPPPPKAHPRPPLPPGT. Position 1132 is a phosphoserine (Ser-1132). A disordered region spans residues 1134-1196; sequence VDYAPGPGRS…PQGGRASGLG (63 aa). Residues Tyr-1136 and Tyr-1161 each carry the phosphotyrosine modification. Residues 1195-1257 form the SAM domain; the sequence is LGEAGMGAWL…LLLDTLQLSK (63 aa). A Phosphoserine modification is found at Ser-1256.

Belongs to the inositol 1,4,5-trisphosphate 5-phosphatase family. In terms of assembly, interacts with tyrosine phosphorylated form of SHC1. Interacts with EGFR. Upon stimulation by the EGF signaling pathway, it forms a complex with SHC1 and EGFR. Interacts with cytoskeletal protein SORBS3/vinexin, promoting its localization to the periphery of cells. Forms a complex with filamin (FLNA or FLNB), actin, GPIb (GP1BA or GP1BB) that regulates cortical and submembraneous actin. Interacts with c-Met/MET, when c-Met/MET is phosphorylated on 'Tyr-1356'. Interacts with p130Cas/BCAR1. Interacts with CENTD3/ARAP3 via its SAM domain. Interacts with c-Cbl/CBL and CAP/SORBS1. Interacts with activated EPHA2 receptor. Interacts with receptors FCGR2A. Interacts with FCGR2B. Interacts with tyrosine kinase ABL1. Interacts with tyrosine kinase TEC. Interacts with CSF1R. Interacts (via N-terminus) with SH3YL1 (via SH3 domain). Interacts (via SH2 domain) with tyrosine phosphorylated KLRC1 (via ITIM). Interacts with NEDD9/HEF1. Tyrosine phosphorylated by the members of the SRC family after exposure to a diverse array of extracellular stimuli such as insulin, growth factors such as EGF or PDGF, chemokines, integrin ligands and hypertonic and oxidative stress. May be phosphorylated upon IgG receptor FCGR2B-binding. Phosphorylated at Tyr-987 following cell attachment and spreading. Phosphorylated at Tyr-1161 following EGF signaling pathway stimulation. Widely expressed.

It localises to the cytoplasm. It is found in the cytosol. The protein localises to the cytoskeleton. The protein resides in the membrane. Its subcellular location is the cell projection. It localises to the filopodium. It is found in the lamellipodium. The protein localises to the basal cell membrane. The protein resides in the nucleus. Its subcellular location is the nucleus speckle. It localises to the spindle pole. It catalyses the reaction a 1,2-diacyl-sn-glycero-3-phospho-(1D-myo-inositol-3,4,5-trisphosphate) + H2O = a 1,2-diacyl-sn-glycero-3-phospho-(1D-myo-inositol-3,4-bisphosphate) + phosphate. The enzyme catalyses 1,2-dioctanoyl-sn-glycero-3-phospho-(1D-myo-inositol-3,4,5-trisphosphate) + H2O = 1,2-dioctanoyl-sn-glycero-3-phospho-(1D-myo-inositol-3,4-bisphosphate) + phosphate. The catalysed reaction is 1,2-dihexadecanoyl-sn-glycero-3-phospho-(1D-myo-inositol-3,4,5-trisphosphate) + H2O = 1,2-dihexadecanoyl-sn-glycero-3-phospho-(1D-myo-inositol-3,4-bisphosphate) + phosphate. Activated upon translocation to the sites of synthesis of PtdIns(3,4,5)P3 in the membrane. Enzymatic activity is enhanced in the presence of phosphatidylserine. Functionally, phosphatidylinositol (PtdIns) phosphatase that specifically hydrolyzes the 5-phosphate of phosphatidylinositol-3,4,5-trisphosphate (PtdIns(3,4,5)P3) to produce PtdIns(3,4)P2, thereby negatively regulating the PI3K (phosphoinositide 3-kinase) pathways. Required for correct mitotic spindle orientation and therefore progression of mitosis. Plays a central role in regulation of PI3K-dependent insulin signaling, although the precise molecular mechanisms and signaling pathways remain unclear. While overexpression reduces both insulin-stimulated MAP kinase and Akt activation, its absence does not affect insulin signaling or GLUT4 trafficking. Confers resistance to dietary obesity. May act by regulating AKT2, but not AKT1, phosphorylation at the plasma membrane. Part of a signaling pathway that regulates actin cytoskeleton remodeling. Required for the maintenance and dynamic remodeling of actin structures as well as in endocytosis, having a major impact on ligand-induced EGFR internalization and degradation. Participates in regulation of cortical and submembraneous actin by hydrolyzing PtdIns(3,4,5)P3 thereby regulating membrane ruffling. Regulates cell adhesion and cell spreading. Required for HGF-mediated lamellipodium formation, cell scattering and spreading. Acts as a negative regulator of EPHA2 receptor endocytosis by inhibiting via PI3K-dependent Rac1 activation. Acts as a regulator of neuritogenesis by regulating PtdIns(3,4,5)P3 level and is required to form an initial protrusive pattern, and later, maintain proper neurite outgrowth. Acts as a negative regulator of the FC-gamma-RIIA receptor (FCGR2A). Mediates signaling from the FC-gamma-RIIB receptor (FCGR2B), playing a central role in terminating signal transduction from activating immune/hematopoietic cell receptor systems. Upon stimulation by EGF, it is recruited by EGFR and dephosphorylates PtdIns(3,4,5)P3. Plays a negative role in regulating the PI3K-PKB pathway, possibly by inhibiting PKB activity. Down-regulates Fc-gamma-R-mediated phagocytosis in macrophages independently of INPP5D/SHIP1. In macrophages, down-regulates NF-kappa-B-dependent gene transcription by regulating macrophage colony-stimulating factor (M-CSF)-induced signaling. Plays a role in the localization of AURKA and NEDD9/HEF1 to the basolateral membrane at interphase in polarized cysts, thereby mediates cell cycle homeostasis, cell polarization and cilia assembly. Additionally promotion of cilia growth is also facilitated by hydrolysis of (PtdIns(3,4,5)P3) to PtdIns(3,4)P2. Promotes formation of apical membrane-initiation sites during the initial stages of lumen formation via Rho family-induced actin filament organization and CTNNB1 localization to cell-cell contacts. May also hydrolyze PtdIns(1,3,4,5)P4, and could thus affect the levels of the higher inositol polyphosphates like InsP6. Involved in endochondral ossification. This is Phosphatidylinositol 3,4,5-trisphosphate 5-phosphatase 2 from Mus musculus (Mouse).